A 72-amino-acid polypeptide reads, in one-letter code: Large ribosomal subunit protein bL31 (72 aa).

Zn(2+)-binding residues include cysteine 16, cysteine 18, cysteine 38, and cysteine 41.

It belongs to the bacterial ribosomal protein bL31 family. Type A subfamily. Part of the 50S ribosomal subunit. It depends on Zn(2+) as a cofactor.

Its function is as follows. Binds the 23S rRNA. In Vibrio campbellii (strain ATCC BAA-1116), this protein is Large ribosomal subunit protein bL31.